A 247-amino-acid polypeptide reads, in one-letter code: Protein GrpE (247 aa).

Over residues 31–49 (QKEETKTTNKDNQKEDETV) the composition is skewed to basic and acidic residues. Residues 31–79 (QKEETKTTNKDNQKEDETVKNQSNQSNQSNQTKQTNTKQQKHQPKENSH) form a disordered region. Positions 50 to 68 (KNQSNQSNQSNQTKQTNTK) are enriched in low complexity.

The protein belongs to the GrpE family. Homodimer.

The protein localises to the cytoplasm. Functionally, participates actively in the response to hyperosmotic and heat shock by preventing the aggregation of stress-denatured proteins, in association with DnaK and GrpE. It is the nucleotide exchange factor for DnaK and may function as a thermosensor. Unfolded proteins bind initially to DnaJ; upon interaction with the DnaJ-bound protein, DnaK hydrolyzes its bound ATP, resulting in the formation of a stable complex. GrpE releases ADP from DnaK; ATP binding to DnaK triggers the release of the substrate protein, thus completing the reaction cycle. Several rounds of ATP-dependent interactions between DnaJ, DnaK and GrpE are required for fully efficient folding. The protein is Protein GrpE of Onion yellows phytoplasma (strain OY-M).